We begin with the raw amino-acid sequence, 162 residues long: Caveolin-2 (162 aa).

Residues 1–86 lie on the Cytoplasmic side of the membrane; sequence MGLETEKADV…FEISKYVMYK (86 aa). A Phosphotyrosine; by SRC modification is found at Tyr-19. Ser-20 carries the post-translational modification Phosphoserine. Tyr-27 bears the Phosphotyrosine; by SRC mark. Phosphoserine is present on Ser-36. The segment at residues 87-107 is an intramembrane region (helical); that stretch reads FLTVFLAIPLAFAAGILFATL. The Cytoplasmic portion of the chain corresponds to 108–162; it reads SCLHIWIIMPFVKTCLMVLPSVQTIWKSVTDVIIAPLCTSVGRSLSSISLQLSHD.

It belongs to the caveolin family. As to quaternary structure, monomer or homodimer. Interacts with CAV1; the interaction forms a stable heterooligomeric complex that is required for targeting to lipid rafts and for caveolae formation. Tyrosine phosphorylated forms do not form heterooligomers with the Tyr-19-phosphorylated form existing as a monomer or dimer, and the Tyr-27-form as a monomer only. Interacts (tyrosine phosphorylated form) with the SH2 domain-containing proteins, RASA1, NCK1 and SRC. Interacts (tyrosine phosphorylated form) with INSR, the interaction (Tyr-27-phosphorylated form) is increased on insulin stimulation. Interacts (Tyr-19 phosphorylated form) with MAPK1 (phosphorylated form); the interaction, promoted by insulin, leads to nuclear location and MAPK1 activation. Interacts with STAT3; the interaction is increased on insulin-induced tyrosine phosphorylation leading to STAT activation. In terms of processing, phosphorylated on serine and tyrosine residues. Phosphorylation on Ser-36 appears to modulate mitosis in endothelial cells. Phosphorylation on both Tyr-19 and Tyr-27 is required for insulin-induced 'Ser-727' phosphorylation of STAT3 and its activation. Phosphorylation on Tyr-19 is required for insulin-induced phosphorylation of MAPK1 and DNA binding of STAT3. Tyrosine phosphorylation is induced by both EGF and insulin.

It localises to the nucleus. The protein resides in the cytoplasm. Its subcellular location is the golgi apparatus membrane. It is found in the cell membrane. The protein localises to the membrane. It localises to the caveola. Functionally, may act as a scaffolding protein within caveolar membranes. Interacts directly with G-protein alpha subunits and can functionally regulate their activity. Acts as an accessory protein in conjunction with CAV1 in targeting to lipid rafts and driving caveolae formation. The Ser-36 phosphorylated form has a role in modulating mitosis in endothelial cells. Positive regulator of cellular mitogenesis of the MAPK signaling pathway. Required for the insulin-stimulated nuclear translocation and activation of MAPK1 and STAT3, and the subsequent regulation of cell cycle progression. In Eulemur macaco macaco (Black lemur), this protein is Caveolin-2 (CAV2).